Here is a 332-residue protein sequence, read N- to C-terminus: Torsin-1A (332 aa).

An N-terminal signal peptide occupies residues 1 to 20 (MKLGRAALGLLLLAPSVVQA). The segment at 91–251 (KPKKPLTLSL…VSVFNNKNSG (161 aa)) is interaction with SNAPIN. 102–109 (GWTGTGKN) contacts ATP. N-linked (GlcNAc...) asparagine glycans are attached at residues Asn143 and Asn158. Residues 251 to 332 (GFWHSSLIDR…FTKLDYYYDD (82 aa)) form an interaction with KLC1 region. The interval 312 to 332 (RVFSDKGCKTVFTKLDYYYDD) is interaction with SYNE3.

Belongs to the ClpA/ClpB family. Torsin subfamily. In terms of assembly, homohexamer. Interacts with TOR1B; the interaction may be specific of neural tissues. Interacts (ATP-bound) with TOR1AIP1 and TOR1AIP2; the interactions induce ATPase activity. Interacts with KLHL14; preferentially when ATP-free. Interacts with KLC1 (via TPR repeats); the interaction associates TOR1A with the kinesin oligomeric complex. Interacts with COPS4; the interaction associates TOR1A with the CSN complex. Interacts with SNAPIN; the interaction is direct and associates SNAPIN with the CSN complex. Interacts with STON2. Interacts (ATP-bound) with SYNE3 (via KASH domain); the interaction is required for SYNE3 nuclear envelope localization. Interacts with VIM; the interaction associates TOR1A with the cytoskeleton. Interacts with PLEC. Interacts (ATP-bound) with SLC6A3; regulates SLC6A3 transport to the plasma membrane. N-glycosylated.

The protein resides in the endoplasmic reticulum lumen. It localises to the nucleus membrane. It is found in the cell projection. The protein localises to the growth cone. Its subcellular location is the cytoplasmic vesicle membrane. The protein resides in the cytoplasmic vesicle. It localises to the secretory vesicle. It is found in the synaptic vesicle. The protein localises to the cytoplasm. Its subcellular location is the cytoskeleton. It catalyses the reaction ATP + H2O = ADP + phosphate + H(+). In terms of biological role, protein with chaperone functions important for the control of protein folding, processing, stability and localization as well as for the reduction of misfolded protein aggregates. Involved in the regulation of synaptic vesicle recycling, controls STON2 protein stability in collaboration with the COP9 signalosome complex (CSN). In the nucleus, may link the cytoskeleton with the nuclear envelope, this mechanism seems to be crucial for the control of nuclear polarity, cell movement and, specifically in neurons, nuclear envelope integrity. Participates in the cellular trafficking and may regulate the subcellular location of multipass membrane proteins such as the dopamine transporter SLC6A3, leading to the modulation of dopamine neurotransmission. In the endoplasmic reticulum, plays a role in the quality control of protein folding by increasing clearance of misfolded proteins such as SGCE variants or holding them in an intermediate state for proper refolding. May have a redundant function with TOR1B in non-neural tissues. This Macaca fascicularis (Crab-eating macaque) protein is Torsin-1A (TOR1A).